The chain runs to 98 residues: Aspartyl/glutamyl-tRNA(Asn/Gln) amidotransferase subunit C (98 aa).

It belongs to the GatC family. As to quaternary structure, heterotrimer of A, B and C subunits.

It carries out the reaction L-glutamyl-tRNA(Gln) + L-glutamine + ATP + H2O = L-glutaminyl-tRNA(Gln) + L-glutamate + ADP + phosphate + H(+). It catalyses the reaction L-aspartyl-tRNA(Asn) + L-glutamine + ATP + H2O = L-asparaginyl-tRNA(Asn) + L-glutamate + ADP + phosphate + 2 H(+). In terms of biological role, allows the formation of correctly charged Asn-tRNA(Asn) or Gln-tRNA(Gln) through the transamidation of misacylated Asp-tRNA(Asn) or Glu-tRNA(Gln) in organisms which lack either or both of asparaginyl-tRNA or glutaminyl-tRNA synthetases. The reaction takes place in the presence of glutamine and ATP through an activated phospho-Asp-tRNA(Asn) or phospho-Glu-tRNA(Gln). The sequence is that of Aspartyl/glutamyl-tRNA(Asn/Gln) amidotransferase subunit C from Bifidobacterium adolescentis (strain ATCC 15703 / DSM 20083 / NCTC 11814 / E194a).